A 403-amino-acid polypeptide reads, in one-letter code: Phosphoglycerate kinase (403 aa).

Substrate-binding positions include 21–23, arginine 36, 59–62, arginine 119, and arginine 154; these read DFN and HLGR. ATP is bound by residues lysine 207, glycine 299, glutamate 330, and 357 to 360; that span reads GGDA.

It belongs to the phosphoglycerate kinase family. As to quaternary structure, monomer.

Its subcellular location is the cytoplasm. It catalyses the reaction (2R)-3-phosphoglycerate + ATP = (2R)-3-phospho-glyceroyl phosphate + ADP. It functions in the pathway carbohydrate degradation; glycolysis; pyruvate from D-glyceraldehyde 3-phosphate: step 2/5. The protein is Phosphoglycerate kinase of Chlamydia caviae (strain ATCC VR-813 / DSM 19441 / 03DC25 / GPIC) (Chlamydophila caviae).